The sequence spans 454 residues: Chromosomal replication initiator protein DnaA (454 aa).

Residues 1–74 (MFDLEKFWDS…IQSAYAYAGI (74 aa)) are domain I, interacts with DnaA modulators. The segment at 74 to 116 (IDIYPVFVVKNGPTPSSERMLEPQPQAKPEKARPQGREFTKDL) is domain II. Positions 88–112 (PSSERMLEPQPQAKPEKARPQGREF) are disordered. Residues 101-112 (KPEKARPQGREF) show a composition bias toward basic and acidic residues. The domain III, AAA+ region stretch occupies residues 117–333 (RLNEKYTFEN…GALVKVQAQA (217 aa)). Residues glycine 161, glycine 163, lysine 164, and threonine 165 each contribute to the ATP site. Residues 334–454 (TIQKQDINIG…VSDLRQMLER (121 aa)) form a domain IV, binds dsDNA region.

Belongs to the DnaA family. As to quaternary structure, oligomerizes as a right-handed, spiral filament on DNA at oriC.

The protein resides in the cytoplasm. Functionally, plays an essential role in the initiation and regulation of chromosomal replication. ATP-DnaA binds to the origin of replication (oriC) to initiate formation of the DNA replication initiation complex once per cell cycle. Binds the DnaA box (a 9 base pair repeat at the origin) and separates the double-stranded (ds)DNA. Forms a right-handed helical filament on oriC DNA; dsDNA binds to the exterior of the filament while single-stranded (ss)DNA is stabiized in the filament's interior. The ATP-DnaA-oriC complex binds and stabilizes one strand of the AT-rich DNA unwinding element (DUE), permitting loading of DNA polymerase. After initiation quickly degrades to an ADP-DnaA complex that is not apt for DNA replication. Binds acidic phospholipids. The sequence is that of Chromosomal replication initiator protein DnaA from Lactobacillus delbrueckii subsp. bulgaricus (strain ATCC 11842 / DSM 20081 / BCRC 10696 / JCM 1002 / NBRC 13953 / NCIMB 11778 / NCTC 12712 / WDCM 00102 / Lb 14).